The chain runs to 307 residues: Ribosomal protein L11 methyltransferase (307 aa).

4 residues coordinate S-adenosyl-L-methionine: Thr-162, Gly-183, Asp-205, and Asn-244.

It belongs to the methyltransferase superfamily. PrmA family.

It is found in the cytoplasm. The catalysed reaction is L-lysyl-[protein] + 3 S-adenosyl-L-methionine = N(6),N(6),N(6)-trimethyl-L-lysyl-[protein] + 3 S-adenosyl-L-homocysteine + 3 H(+). In terms of biological role, methylates ribosomal protein L11. In Bordetella bronchiseptica (strain ATCC BAA-588 / NCTC 13252 / RB50) (Alcaligenes bronchisepticus), this protein is Ribosomal protein L11 methyltransferase.